A 290-amino-acid polypeptide reads, in one-letter code: uncharacterized protein (290 aa).

The next 5 membrane-spanning stretches (helical) occupy residues 14–34 (ALLN…IGIL), 82–102 (ISSL…LIGG), 115–135 (NLIA…IYLY), 158–174 (DAFV…SSQL), and 176–196 (LPWV…KTAW).

This sequence belongs to the cation diffusion facilitator (CDF) transporter (TC 2.A.4) family.

It is found in the cell membrane. This is an uncharacterized protein from Bacillus subtilis (strain 168).